A 299-amino-acid polypeptide reads, in one-letter code: ATP phosphoribosyltransferase (299 aa).

It belongs to the ATP phosphoribosyltransferase family. Long subfamily. In terms of assembly, equilibrium between an active dimeric form, an inactive hexameric form and higher aggregates. Interconversion between the various forms is largely reversible and is influenced by the natural substrates and inhibitors of the enzyme. The cofactor is Mg(2+).

It localises to the cytoplasm. It carries out the reaction 1-(5-phospho-beta-D-ribosyl)-ATP + diphosphate = 5-phospho-alpha-D-ribose 1-diphosphate + ATP. It participates in amino-acid biosynthesis; L-histidine biosynthesis; L-histidine from 5-phospho-alpha-D-ribose 1-diphosphate: step 1/9. Feedback inhibited by histidine. In terms of biological role, catalyzes the condensation of ATP and 5-phosphoribose 1-diphosphate to form N'-(5'-phosphoribosyl)-ATP (PR-ATP). Has a crucial role in the pathway because the rate of histidine biosynthesis seems to be controlled primarily by regulation of HisG enzymatic activity. The protein is ATP phosphoribosyltransferase of Pectobacterium carotovorum subsp. carotovorum (strain PC1).